The primary structure comprises 492 residues: Catalase isozyme 1 (492 aa).

Catalysis depends on residues H65 and N138. Heme is bound at residue Y348.

Belongs to the catalase family. Homotetramer. Requires heme as cofactor. In whole endosperms (aleurones plus starchy endosperm), in isolated aleurones and in developing seeds.

The protein localises to the peroxisome. The protein resides in the glyoxysome. It carries out the reaction 2 H2O2 = O2 + 2 H2O. Occurs in almost all aerobically respiring organisms and serves to protect cells from the toxic effects of hydrogen peroxide. In Hordeum vulgare (Barley), this protein is Catalase isozyme 1 (CAT1).